The primary structure comprises 185 residues: Ribosome-recycling factor (185 aa).

The protein belongs to the RRF family.

The protein resides in the cytoplasm. Functionally, responsible for the release of ribosomes from messenger RNA at the termination of protein biosynthesis. May increase the efficiency of translation by recycling ribosomes from one round of translation to another. The protein is Ribosome-recycling factor of Azoarcus sp. (strain BH72).